Consider the following 287-residue polypeptide: 4-hydroxybenzoate octaprenyltransferase (287 aa).

8 helical membrane passes run 23 to 43, 46 to 66, 99 to 119, 141 to 161, 162 to 182, 213 to 233, 237 to 257, and 266 to 286; these read IGSLLLLWPTYWALWLAGGTA, GKLLLVFTCGVFFMRAAGCVI, LFVLLVGLSFALVLTLNAMTI, LPQVILGMAFGWSIPMAYAAV, GESLPLSCWLLFAANICWTVA, LVIGLLQLATLLLLLWVGDLN, GAYYWGVLLAAVLFVYQQQLI, and FRAFMNNNYVGLILFLGILLA.

Belongs to the UbiA prenyltransferase family. Mg(2+) serves as cofactor.

The protein resides in the cell inner membrane. It catalyses the reaction all-trans-octaprenyl diphosphate + 4-hydroxybenzoate = 4-hydroxy-3-(all-trans-octaprenyl)benzoate + diphosphate. It participates in cofactor biosynthesis; ubiquinone biosynthesis. In terms of biological role, catalyzes the prenylation of para-hydroxybenzoate (PHB) with an all-trans polyprenyl group. Mediates the second step in the final reaction sequence of ubiquinone-8 (UQ-8) biosynthesis, which is the condensation of the polyisoprenoid side chain with PHB, generating the first membrane-bound Q intermediate 3-octaprenyl-4-hydroxybenzoate. The chain is 4-hydroxybenzoate octaprenyltransferase from Edwardsiella ictaluri (strain 93-146).